Reading from the N-terminus, the 1055-residue chain is SMC5-SMC6 complex localization factor protein 1 (1055 aa).

2 BRCT domains span residues 2-80 (EDDA…AQSG) and 121-199 (PGAF…LLEK). The disordered stretch occupies residues 312-332 (KKRKKEKERDSRKDIEHDRST). The span at 318–332 (KERDSRKDIEHDRST) shows a compositional bias: basic and acidic residues. The interval 407–1055 (PRGILNLIES…VMCRSVTEIS (649 aa)) is NSE5-like domain; mediates interaction with SLF2. ANK repeat units follow at residues 804-834 (KGET…DINV), 838-867 (AGWT…EVDL), and 872-901 (DGVT…PVLL). Residue Lys-929 forms a Glycyl lysine isopeptide (Lys-Gly) (interchain with G-Cter in SUMO2) linkage.

Interacts (via N-terminus) with SLF2; this interaction links RAD18 to the SMC5-SMC6 complex. Interacts (via BRCT domains) with RAD18; this interaction occurs in a SLF2-independent manner. Interacts with SMC6. Interacts (via BRCT domains) with RAD18 (via C-terminus and phosphorylated form); this interaction is required for efficient repair of UV-induced DNA damage.

Its subcellular location is the nucleus. It is found in the cytoplasm. The protein resides in the cytoskeleton. It localises to the microtubule organizing center. The protein localises to the centrosome. In terms of biological role, plays a role in the DNA damage response (DDR) pathway by regulating postreplication repair of UV-damaged DNA and genomic stability maintenance. The SLF1-SLF2 complex acts to link RAD18 with the SMC5-SMC6 complex at replication-coupled interstrand cross-links (ICL) and DNA double-strand breaks (DSBs) sites on chromatin during DNA repair in response to stalled replication forks. Promotes the recruitment of SLF2 and the SMC5-SMC6 complex to DNA lesions. This Bos taurus (Bovine) protein is SMC5-SMC6 complex localization factor protein 1.